A 512-amino-acid chain; its full sequence is mRNA export factor (512 aa).

The segment covering 1–15 (MATDIDMLIDLGLDL) has biased composition (low complexity). The tract at residues 1–243 (MATDIDMLID…APERKAPAAD (243 aa)) is disordered. A Nuclear export signal motif is present at residues 5 to 17 (IDMLIDLGLDLSD). 2 positions are modified to phosphoserine; by host: Ser16 and Ser18. Composition is skewed to acidic residues over residues 16-26 (SDSDLDEDPPE) and 35-51 (LESD…EDME). Positions 104-112 (VWSRLGARR) are interaction with host ALYREF. The Nuclear localization signal signature appears at 110 to 138 (ARRPSCSPEQHGGKVARLQPPPTKAQPAR). Ser114 carries the phosphoserine; by host modification. Dimethylated arginine; by host is present on Arg138. Residues 138–152 (RGGRRGRRRGRGRGG) are RGG-box. Basic residues predominate over residues 139–149 (GGRRGRRRGRG). The residue at position 148 (Arg148) is an Omega-N-methylarginine; by host. At Arg150 the chain carries Dimethylated arginine; by host. The span at 214 to 233 (APPPLMTLAIAPPPADPRAP) shows a compositional bias: pro residues. Zn(2+)-binding residues include Cys400, His479, Cys483, and Cys488. The segment at 400–488 (CYLKARGLCG…HRQECSSRVC (89 aa)) adopts a CHC2-type zinc-finger fold. The interval 500 to 512 (YVHGKYFYCNSLF) is important for homodimerization.

The protein belongs to the HHV-1 ICP27 protein family. In terms of assembly, homodimer. Interacts with host RBP1; this interaction facilitates the RNA polymerase recruitment to viral transcription sites. Interacts (via the RGG box) with host ALYREF/THOC4; this interaction recruits ALYREF to viral replication compartments and probably directs viral mRNA to the TAP/NFX1 pathway. Interacts with host ALYREF2. Interacts (via the RGG box) with host SRPK1; this interaction relocalizes SRPK1 to the nucleus and seems to alter its activity. Interacts with ICP4; this interaction modulates ICP4 DNA-binding activity. Interacts with host NXF1; this interaction allows efficient export of HHV-1 early and late transcripts. Post-translationally, methylated within the RGG box possibly by host PRMT1. When hypomethylated, ICP27 is exported to the cytoplasm earlier and more rapidly. Phosphorylated.

The protein localises to the host cytoplasm. It localises to the host nucleus. Its function is as follows. Multifunctional regulator of the expression of viral genes that contributes to the shutoff of host protein synthesis and mediates nuclear export of viral intronless mRNAs. Early in infection, this immediate early (EI) protein mediates the inhibition of cellular splicing. This results in the accumulation of unprocessed 3'end pre-mRNAs which can't be exported from the nucleus. Cellular protein synthesis is thereby shut off early after virus infection. Later in the infection, it helps recruit cellular RNA polymerase II to viral replication sites and promotes the nuclear export of viral intronless mRNAs by interacting with mRNAs and host NXF1/TAP. ICP27 binds to NUP62 which may provide facilitated viral mRNA export and may indirectly compete with some host cell transport receptors for binding and inhibit cellular nucleocytoplasmic transport pathways. Also stimulates translation of viral transcripts. Repression of host gene expression blocks the cell cycle at the G1 phase and prevents apoptosis. Seems to silence the 3' splice site of the promyelocytic leukemia (PML) intron 7a, thereby switching PML isoforms from PML-II to PML-V. This could be linked to the accelerated mRNA export induced by ICP27 which might not provide sufficient time for PML pre-mRNA to be spliced in the nucleus. The protein is mRNA export factor of Homo sapiens (Human).